Reading from the N-terminus, the 329-residue chain is MVKTQRVVITPGEPAGIGPDLVVQLAQREWPVELVVCADATLLIDRAAMLGLPLTLRPYSPNSPAQPQTTGTLTLLPVALRESVTAGQLAIENGHYVVETLARACDGCLNGEFAALITGPVHKGVINDAGIPFTGHTEFFEERSQAKKVVMMLATEELRVALATTHLPLRDIADAITPALLHEVIAILHHDLRTKFGIAEPRILVCGLNPHAGEGGHMGTEEIDTIIPVLDELRAQGMKLNGPLPADTLFQPKYLDNADAVLAMYHDQGLPVLKYQGFGRGVNITLGLPFIRTSVDHGTALELAGRGKADVGSFITALNLAIKMIVNTQ.

Residues His136 and Thr137 each contribute to the substrate site. A divalent metal cation is bound by residues His166, His211, and His266. Substrate contacts are provided by Lys274, Asn283, and Arg292.

It belongs to the PdxA family. As to quaternary structure, homodimer. It depends on Zn(2+) as a cofactor. Requires Mg(2+) as cofactor. The cofactor is Co(2+).

It is found in the cytoplasm. The enzyme catalyses 4-(phosphooxy)-L-threonine + NAD(+) = 3-amino-2-oxopropyl phosphate + CO2 + NADH. It functions in the pathway cofactor biosynthesis; pyridoxine 5'-phosphate biosynthesis; pyridoxine 5'-phosphate from D-erythrose 4-phosphate: step 4/5. Functionally, catalyzes the NAD(P)-dependent oxidation of 4-(phosphooxy)-L-threonine (HTP) into 2-amino-3-oxo-4-(phosphooxy)butyric acid which spontaneously decarboxylates to form 3-amino-2-oxopropyl phosphate (AHAP). This is 4-hydroxythreonine-4-phosphate dehydrogenase from Escherichia coli (strain 55989 / EAEC).